Here is a 567-residue protein sequence, read N- to C-terminus: 25S rRNA (cytosine-C(5))-methyltransferase NSUN5 (567 aa).

Over residues 1–17 (MVARRNKPKAPLVKHRF) the composition is skewed to basic residues. Residues 1 to 88 (MVARRNKPKA…KTPPATKQKF (88 aa)) form a disordered region. S-adenosyl-L-methionine is bound by residues 312–318 (CSAPGNK), Glu-336, Asp-363, and Asp-383. Cys-444 (nucleophile) is an active-site residue.

It belongs to the class I-like SAM-binding methyltransferase superfamily. RsmB/NOP family.

The enzyme catalyses a cytidine in 25S rRNA + S-adenosyl-L-methionine = a 5-methylcytidine in 25S rRNA + S-adenosyl-L-homocysteine + H(+). S-adenosyl-L-methionine-dependent methyltransferase that specifically methylates the C(5) position of cytosine 2268 (m5C2268) in 25S rRNA. The protein is 25S rRNA (cytosine-C(5))-methyltransferase NSUN5 of Arabidopsis thaliana (Mouse-ear cress).